Reading from the N-terminus, the 176-residue chain is ATP-dependent protease subunit HslV (176 aa).

T2 is a catalytic residue. 3 residues coordinate Na(+): G157, C160, and T163.

It belongs to the peptidase T1B family. HslV subfamily. A double ring-shaped homohexamer of HslV is capped on each side by a ring-shaped HslU homohexamer. The assembly of the HslU/HslV complex is dependent on binding of ATP.

The protein localises to the cytoplasm. It catalyses the reaction ATP-dependent cleavage of peptide bonds with broad specificity.. Allosterically activated by HslU binding. Its function is as follows. Protease subunit of a proteasome-like degradation complex believed to be a general protein degrading machinery. The protein is ATP-dependent protease subunit HslV of Pectobacterium carotovorum subsp. carotovorum (strain PC1).